The following is a 453-amino-acid chain: uncharacterized protein (453 aa).

Residues 5 to 63 (LLKKNQSIELTIEDLTHDGSGVGKIDGYPFFIPNTLPGEKVTAKIIKLNKNYGFARMEN) enclose the TRAM domain. [4Fe-4S] cluster-binding residues include C76, C82, C85, and C162. Residues Q285, Y314, E335, and D383 each contribute to the S-adenosyl-L-methionine site. C410 (nucleophile) is an active-site residue.

The protein belongs to the class I-like SAM-binding methyltransferase superfamily. RNA M5U methyltransferase family.

This is an uncharacterized protein from Listeria monocytogenes serovar 1/2a (strain ATCC BAA-679 / EGD-e).